We begin with the raw amino-acid sequence, 103 residues long: Pyrimidine/purine nucleoside phosphorylase (103 aa).

This sequence belongs to the nucleoside phosphorylase PpnP family.

The enzyme catalyses a purine D-ribonucleoside + phosphate = a purine nucleobase + alpha-D-ribose 1-phosphate. It catalyses the reaction adenosine + phosphate = alpha-D-ribose 1-phosphate + adenine. It carries out the reaction cytidine + phosphate = cytosine + alpha-D-ribose 1-phosphate. The catalysed reaction is guanosine + phosphate = alpha-D-ribose 1-phosphate + guanine. The enzyme catalyses inosine + phosphate = alpha-D-ribose 1-phosphate + hypoxanthine. It catalyses the reaction thymidine + phosphate = 2-deoxy-alpha-D-ribose 1-phosphate + thymine. It carries out the reaction uridine + phosphate = alpha-D-ribose 1-phosphate + uracil. The catalysed reaction is xanthosine + phosphate = alpha-D-ribose 1-phosphate + xanthine. Its function is as follows. Catalyzes the phosphorolysis of diverse nucleosides, yielding D-ribose 1-phosphate and the respective free bases. Can use uridine, adenosine, guanosine, cytidine, thymidine, inosine and xanthosine as substrates. Also catalyzes the reverse reactions. The sequence is that of Pyrimidine/purine nucleoside phosphorylase from Shewanella baltica (strain OS195).